We begin with the raw amino-acid sequence, 65 residues long: Large ribosomal subunit protein bL35 (65 aa).

The tract at residues 1–26 (MPKIKTVRGAAKRFKKTASGGFKRKQ) is disordered. Over residues 10–26 (AAKRFKKTASGGFKRKQ) the composition is skewed to basic residues.

The protein belongs to the bacterial ribosomal protein bL35 family.

In Haemophilus ducreyi (strain 35000HP / ATCC 700724), this protein is Large ribosomal subunit protein bL35.